Here is a 562-residue protein sequence, read N- to C-terminus: Arf-GAP domain and FG repeat-containing protein 1 (562 aa).

The 125-residue stretch at 11 to 135 (EKHLKMLRDM…WYVPPEQAKV (125 aa)) folds into the Arf-GAP domain. The C4-type zinc finger occupies 29 to 52 (CFDCDQRGPTYVNMTVGSFVCTSC). Ser167 is subject to Phosphoserine. Residues 168–194 (APALHLNKGTPSQSPVVGRSQAQQQEK) form a disordered region. Over residues 176–191 (GTPSQSPVVGRSQAQQ) the composition is skewed to polar residues. Thr177 carries the phosphothreonine modification. Ser181 and Ser362 each carry phosphoserine. Ser367 carries O-linked (GlcNAc) serine glycosylation.

Interacts with EPS15R and EPS15. Interacts with FCHO1. In terms of processing, O-glycosylated.

It localises to the nucleus. The protein resides in the cytoplasmic vesicle. Required for vesicle docking or fusion during acrosome biogenesis. May play a role in RNA trafficking or localization. In Bos taurus (Bovine), this protein is Arf-GAP domain and FG repeat-containing protein 1 (AGFG1).